The sequence spans 359 residues: Lachesin (359 aa).

The first 25 residues, 1–25, serve as a signal peptide directing secretion; the sequence is MWRPSISNCVWSTLLLAIFVQQTLA. The Ig-like V-type domain maps to 29 to 130; sequence PTISYITQEQ…HKVSAEVKLS (102 aa). C50 and C113 form a disulfide bridge. N-linked (GlcNAc...) asparagine glycosylation is found at N92 and N140. Ig-like C2-type domains follow at residues 135 to 221 and 226 to 317; these read PVIS…INVE and PVIT…ARVN. Disulfide bonds link C157-C204 and C247-C303. A lipid anchor (GPI-anchor amidated alanine) is attached at A336. Positions 337-359 are cleaved as a propeptide — removed in mature form; the sequence is GAEDVSATSFALVGILAALLFAR.

In terms of tissue distribution, expressed on differentiating neuronal cells from the onset of neurogenesis in both the central and peripheral nervous systems. First detected in the cellularized blastoderm, apart from in the ventral side. Expression persists uniformly in the early ectoderm until the end of gastrulation. From stage 10, expressed in an alternating strong/weak pattern in each segment until stage 15 when it disappears. From stage 11, expressed in subsets of neurons and later subsets of glial cells. From early stage 13, strongly expressed in trachea, hindgut, foregut and the nervous system.

It is found in the cell membrane. Functionally, required for normal tracheal development and maintenance of the trans-epithelial diffusion barrier. Functions as a homophilic cell-adhesion molecule. May play a role in early neuronal differentiation and axon outgrowth. In Drosophila melanogaster (Fruit fly), this protein is Lachesin (Lac).